The chain runs to 1302 residues: Vascular endothelial growth factor receptor kdr-like (1302 aa).

The N-terminal stretch at 1-28 (MTPLKTSVKAFFTLHVLFSCISHGLVEG) is a signal peptide. At 29-740 (SRLPDPQLLP…GEDGKPNIEV (712 aa)) the chain is on the extracellular side. Ig-like C2-type domains follow at residues 34-115 (PQLL…HEVS), 143-206 (DPYF…VDNA), 222-318 (KNLA…TKVI), 326-412 (NVTH…ISYK), 419-542 (PKIF…FYVD), 545-636 (PQPF…SALT), and 643-728 (PWLM…AVIT). 2 cysteine pairs are disulfide-bonded: Cys-55/Cys-104 and Cys-150/Cys-199. Residues Asn-69 and Asn-97 are each glycosylated (N-linked (GlcNAc...) asparagine). N-linked (GlcNAc...) asparagine glycans are attached at residues Asn-242, Asn-265, Asn-291, Asn-326, Asn-370, Asn-380, Asn-408, Asn-453, Asn-466, Asn-505, Asn-517, Asn-532, Asn-607, Asn-611, Asn-630, Asn-648, and Asn-655. A disulfide bond links Cys-243 and Cys-302. Cys-444 and Cys-524 are joined by a disulfide. A disulfide bond links Cys-565 and Cys-618. Cysteines 664 and 712 form a disulfide. A helical transmembrane segment spans residues 741 to 761 (IILVSTGAAATFLWIMLILFI). Residues 762-1302 (RKLRKPSSAD…YVVRYSTPPV (541 aa)) lie on the Cytoplasmic side of the membrane. The region spanning 809–1139 (LRLGKTLGHG…ELVERLGDLL (331 aa)) is the Protein kinase domain. ATP is bound by residues 815–823 (LGHGAFGKV) and Lys-843. The active-site Proton acceptor is the Asp-1003. Residues Tyr-1029, Tyr-1034, and Tyr-1150 each carry the phosphotyrosine; by autocatalysis modification. Disordered stretches follow at residues 1159–1179 (TKAD…PVSL) and 1266–1292 (PLVP…PDYN). A compositionally biased stretch (polar residues) spans 1162–1176 (DPSNQSPTEETSTRP).

Belongs to the protein kinase superfamily. Tyr protein kinase family. CSF-1/PDGF receptor subfamily. As to quaternary structure, interacts with isoform VEGF165 of vegfaa and isoform VEGF171 of vegfab. Post-translationally, phosphorylated and activated by vegfaa and vegfab. First expressed in embryos between 5- and 7-somites. At 7 somites, expressed in discrete bilateral stripes both anteriorly and posteriorly, and in a transverse ectodermal stripe in the hindbrain. From 7-somites, expression seems to extend caudally from the head, and in both directions in the trunk region, until by 20-somites, expression is detected as a continuous band from the anterior head region to the tailbud. Concurrently, cells expressing kdrl in the mid- and posterior trunk regions converge medially. By 24 hours post-fertilization (hpf), expressed in all the endothelial cells lining the vasculature.

It is found in the cell membrane. The catalysed reaction is L-tyrosyl-[protein] + ATP = O-phospho-L-tyrosyl-[protein] + ADP + H(+). Functionally, receptor for VEGF or VEGFC. Has a tyrosine-protein kinase activity. Combinations of multiple VEGF receptors are required for development of different blood vessel types in the embryo. Involved in angiogenesis, specifically in VEGF-induced sprouting of new blood vessels. Particularly involved in artery formation. Does not appear to be required for hematopoiesis. The protein is Vascular endothelial growth factor receptor kdr-like (kdrl) of Danio rerio (Zebrafish).